The sequence spans 349 residues: Phenylalanine--tRNA ligase alpha subunit (349 aa).

Glutamate 258 serves as a coordination point for Mg(2+).

Belongs to the class-II aminoacyl-tRNA synthetase family. Phe-tRNA synthetase alpha subunit type 1 subfamily. Tetramer of two alpha and two beta subunits. Mg(2+) serves as cofactor.

The protein localises to the cytoplasm. It carries out the reaction tRNA(Phe) + L-phenylalanine + ATP = L-phenylalanyl-tRNA(Phe) + AMP + diphosphate + H(+). The sequence is that of Phenylalanine--tRNA ligase alpha subunit from Rickettsia rickettsii (strain Sheila Smith).